The following is a 135-amino-acid chain: Large ribosomal subunit protein uL16c (135 aa).

The protein belongs to the universal ribosomal protein uL16 family. As to quaternary structure, part of the 50S ribosomal subunit.

The protein resides in the plastid. The protein localises to the chloroplast. This is Large ribosomal subunit protein uL16c from Coffea arabica (Arabian coffee).